The chain runs to 763 residues: Long-chain-fatty-acid--CoA ligase ACSBG2 (763 aa).

The disordered stretch occupies residues 47–78; it reads CSMKPADDPKTERSQMNKTGLASSSRPASNVW. Residues 51 to 61 show a composition bias toward basic and acidic residues; the sequence is PADDPKTERSQ. Residues 62–78 are compositionally biased toward polar residues; it reads MNKTGLASSSRPASNVW. Residues 281 to 289, 472 to 477, aspartate 550, arginine 565, and lysine 678 each bind ATP; these read TSGTTGQPK and ELYGMS.

This sequence belongs to the ATP-dependent AMP-binding enzyme family. Bubblegum subfamily.

It is found in the cytoplasm. The enzyme catalyses a long-chain fatty acid + ATP + CoA = a long-chain fatty acyl-CoA + AMP + diphosphate. The catalysed reaction is (5Z,8Z,11Z,14Z)-eicosatetraenoate + ATP + CoA = (5Z,8Z,11Z,14Z)-eicosatetraenoyl-CoA + AMP + diphosphate. It catalyses the reaction hexadecanoate + ATP + CoA = hexadecanoyl-CoA + AMP + diphosphate. It carries out the reaction (9Z)-octadecenoate + ATP + CoA = (9Z)-octadecenoyl-CoA + AMP + diphosphate. The enzyme catalyses (9Z,12Z)-octadecadienoate + ATP + CoA = (9Z,12Z)-octadecadienoyl-CoA + AMP + diphosphate. The catalysed reaction is tetracosanoate + ATP + CoA = tetracosanoyl-CoA + AMP + diphosphate. Its function is as follows. Mediates activation of long-chain fatty acids for both synthesis of cellular lipids, and degradation via beta-oxidation. Functionally, catalyzes the conversion of fatty acids such as long chain and very long-chain fatty acids to their active form acyl-CoAs for both synthesis of cellular lipids, and degradation via beta-oxidation. Can activate diverse saturated, monosaturated and polyunsaturated fatty acids. This is Long-chain-fatty-acid--CoA ligase ACSBG2 from Gallus gallus (Chicken).